A 398-amino-acid polypeptide reads, in one-letter code: MAIKVLVVDDSSFFRRRVSEIVNQDPDLEVVAVAVNGKEAVEMAAKLKPQVITMDIEMPVMDGITAVREIMANNPTPILMFSSLTHDGAKATLDALEAGALDFLPKRFEDIATNKDDAILLLQQRIKALGRRRMYRSSSLTPTSTIESRRSTIAAPETNTPRRPLSSRLASTTTPVATRSSLSTTSADRHSANPTTSSISSIRASGKQYKLLLIGTSTGGPVALQKVLTAFPANYPHPIVLIQHMPAAFTPAFAARLNTLCKIEVKEAENGDVMRPGCAYLAPGGMQLMIERSGISGRLKVISGTQEMNYKPCVDITFASASKAFGGDVLAVVLTGMGADGREGARMLKSVGATIWAQDEASCVVYGMPQAVASTGISTHSISLDNMAEAILKESSRG.

Positions 4 to 121 constitute a Response regulatory domain; that stretch reads KVLVVDDSSF…ATNKDDAILL (118 aa). A 4-aspartylphosphate modification is found at aspartate 55. Residues 133 to 200 are disordered; the sequence is RMYRSSSLTP…SANPTTSSIS (68 aa). Composition is skewed to polar residues over residues 136 to 146 and 168 to 200; these read RSSSLTPTSTI and RLAS…SSIS. The region spanning 205 to 398 is the CheB-type methylesterase domain; it reads SGKQYKLLLI…EAILKESSRG (194 aa). Active-site residues include serine 217, histidine 244, and aspartate 340.

It belongs to the CheB family. In terms of processing, phosphorylated by CheA. Phosphorylation of the N-terminal regulatory domain activates the methylesterase activity.

Its subcellular location is the cytoplasm. The enzyme catalyses [protein]-L-glutamate 5-O-methyl ester + H2O = L-glutamyl-[protein] + methanol + H(+). It catalyses the reaction L-glutaminyl-[protein] + H2O = L-glutamyl-[protein] + NH4(+). In terms of biological role, involved in chemotaxis. Part of a chemotaxis signal transduction system that modulates chemotaxis in response to various stimuli. Catalyzes the demethylation of specific methylglutamate residues introduced into the chemoreceptors (methyl-accepting chemotaxis proteins or MCP) by CheR. Also mediates the irreversible deamidation of specific glutamine residues to glutamic acid. The protein is Protein-glutamate methylesterase/protein-glutamine glutaminase of Shewanella frigidimarina (strain NCIMB 400).